The primary structure comprises 101 residues: Small ribosomal subunit protein uS14 (101 aa).

It belongs to the universal ribosomal protein uS14 family. As to quaternary structure, part of the 30S ribosomal subunit. Contacts proteins S3 and S10.

In terms of biological role, binds 16S rRNA, required for the assembly of 30S particles and may also be responsible for determining the conformation of the 16S rRNA at the A site. The protein is Small ribosomal subunit protein uS14 of Burkholderia mallei (strain NCTC 10247).